The following is a 278-amino-acid chain: MKLCGFEAGLDQPFFLIAGPCTAESEQLCLDVAGHMKEVCARLGINYIFKASYDKANRSSGKSVRGLGLEEGLRIFSEVQRQIGVPVLTDVHTIEDIPAVAAVVDVLQTPAFLCRQTDFIHAVATCGKPVNIKKGQFLAPGDMKNVVDKAREVNNGADNIMVCERGASFGYNNLVSDMRSLAIMRETGCPVVFDATHSVQLPGGQGTTSGGQREFVPVLARAAIAVGISGLFMETHPCPEKAWSDGPNSWPLDRMESLLATLVALDKAVKTAGFEELK.

It belongs to the KdsA family.

It is found in the cytoplasm. The catalysed reaction is D-arabinose 5-phosphate + phosphoenolpyruvate + H2O = 3-deoxy-alpha-D-manno-2-octulosonate-8-phosphate + phosphate. It functions in the pathway carbohydrate biosynthesis; 3-deoxy-D-manno-octulosonate biosynthesis; 3-deoxy-D-manno-octulosonate from D-ribulose 5-phosphate: step 2/3. Its pathway is bacterial outer membrane biogenesis; lipopolysaccharide biosynthesis. The chain is 2-dehydro-3-deoxyphosphooctonate aldolase from Dechloromonas aromatica (strain RCB).